Consider the following 156-residue polypeptide: Movement protein P17 (156 aa).

The tract at residues 38 to 54 (AEDAEEEAIAAQEELEF) is homodimerization. 2 disordered regions span residues 55–80 (PEDE…EVSP) and 106–156 (ASYF…IKRG). The RNA-binding stretch occupies residues 57-156 (DEAQARHSCL…RAAPKLIKRG (100 aa)). Residues Ser-71, Ser-79, Ser-137, and Ser-140 each carry the phosphoserine modification. Positions 144–156 (KLRRAAPKLIKRG) are enriched in basic residues.

Belongs to the polerovirus movement protein family. As to quaternary structure, homodimer. In terms of processing, expressed as a nonphosphorylated 20kDa form and a phosphorylated 22kDa form. Phosphorylated by a host PKC-related kinase. Serine phosphorylation is required for plamodesma targeting.

It is found in the host cell junction. Its subcellular location is the host plasmodesma. The protein resides in the host chloroplast envelope. The protein localises to the host Golgi apparatus. It localises to the host mitochondrion outer membrane. In terms of biological role, together with movement protein P3a, facilitates long-distance movement of virions in host. Transports viral genome to neighboring plant cells directly through plasmosdesmata, without any budding. The movement protein allows efficient cell to cell propagation, by bypassing the host cell wall barrier. Binds ssRNA. The sequence is that of Movement protein P17 from Potato leafroll virus (strain Potato/Canada/Rowhani/1979) (PLrV).